A 105-amino-acid chain; its full sequence is MYWPCLVITPFTVGESFCLLLSLGIPLDTGILNIWSLSSISRHLEKLSIMLGNCGLTISSMSQEHSFTASLKLSYLSSAPNLSFGNKSTLILLFEHFHCVLDQIL.

The N-terminal stretch at 1–24 (MYWPCLVITPFTVGESFCLLLSLG) is a signal peptide.

This is an uncharacterized protein from Saccharomyces cerevisiae (strain ATCC 204508 / S288c) (Baker's yeast).